The sequence spans 146 residues: Ribonuclease H (146 aa).

In terms of domain architecture, RNase H type-1 spans 4–145; the sequence is ELNKVVIYTD…ADILARSQIS (142 aa). Mg(2+)-binding residues include Asp13, Glu51, Asp73, and Asp137.

Belongs to the RNase H family. In terms of assembly, monomer. It depends on Mg(2+) as a cofactor.

It is found in the cytoplasm. The enzyme catalyses Endonucleolytic cleavage to 5'-phosphomonoester.. Endonuclease that specifically degrades the RNA of RNA-DNA hybrids. The sequence is that of Ribonuclease H from Ehrlichia canis (strain Jake).